The following is a 1072-amino-acid chain: DNA-directed RNA polymerase subunit beta (1072 aa).

The protein belongs to the RNA polymerase beta chain family. As to quaternary structure, in plastids the minimal PEP RNA polymerase catalytic core is composed of four subunits: alpha, beta, beta', and beta''. When a (nuclear-encoded) sigma factor is associated with the core the holoenzyme is formed, which can initiate transcription.

The protein localises to the plastid. Its subcellular location is the chloroplast. The catalysed reaction is RNA(n) + a ribonucleoside 5'-triphosphate = RNA(n+1) + diphosphate. Functionally, DNA-dependent RNA polymerase catalyzes the transcription of DNA into RNA using the four ribonucleoside triphosphates as substrates. This is DNA-directed RNA polymerase subunit beta from Cycas taitungensis (Prince sago).